A 445-amino-acid chain; its full sequence is tRNA modification GTPase MnmE (445 aa).

3 residues coordinate (6S)-5-formyl-5,6,7,8-tetrahydrofolate: R20, E79, and K119. One can recognise a TrmE-type G domain in the interval 215 to 371 (GLKLAIIGPP…ILKNIEEIAE (157 aa)). N225 contributes to the K(+) binding site. GTP contacts are provided by residues 225–230 (NAGKSS), 244–250 (SNIAGTT), and 269–272 (DTAG). Residue S229 participates in Mg(2+) binding. K(+) contacts are provided by S244, I246, and T249. A Mg(2+)-binding site is contributed by T250. (6S)-5-formyl-5,6,7,8-tetrahydrofolate is bound at residue K445.

The protein belongs to the TRAFAC class TrmE-Era-EngA-EngB-Septin-like GTPase superfamily. TrmE GTPase family. In terms of assembly, homodimer. Heterotetramer of two MnmE and two MnmG subunits. Requires K(+) as cofactor.

Its subcellular location is the cytoplasm. In terms of biological role, exhibits a very high intrinsic GTPase hydrolysis rate. Involved in the addition of a carboxymethylaminomethyl (cmnm) group at the wobble position (U34) of certain tRNAs, forming tRNA-cmnm(5)s(2)U34. This Rickettsia bellii (strain OSU 85-389) protein is tRNA modification GTPase MnmE.